The following is a 367-amino-acid chain: Aminomethyltransferase (367 aa).

It belongs to the GcvT family. The glycine cleavage system is composed of four proteins: P, T, L and H.

The enzyme catalyses N(6)-[(R)-S(8)-aminomethyldihydrolipoyl]-L-lysyl-[protein] + (6S)-5,6,7,8-tetrahydrofolate = N(6)-[(R)-dihydrolipoyl]-L-lysyl-[protein] + (6R)-5,10-methylene-5,6,7,8-tetrahydrofolate + NH4(+). In terms of biological role, the glycine cleavage system catalyzes the degradation of glycine. This is Aminomethyltransferase from Saccharopolyspora erythraea (strain ATCC 11635 / DSM 40517 / JCM 4748 / NBRC 13426 / NCIMB 8594 / NRRL 2338).